Reading from the N-terminus, the 515-residue chain is Maturase K (515 aa).

This sequence belongs to the intron maturase 2 family. MatK subfamily.

It is found in the plastid. It localises to the chloroplast. Functionally, usually encoded in the trnK tRNA gene intron. Probably assists in splicing its own and other chloroplast group II introns. The polypeptide is Maturase K (Pinus banksiana (Jack pine)).